Here is a 193-residue protein sequence, read N- to C-terminus: Probable nicotinate-nucleotide adenylyltransferase (193 aa).

It belongs to the NadD family.

It catalyses the reaction nicotinate beta-D-ribonucleotide + ATP + H(+) = deamido-NAD(+) + diphosphate. It participates in cofactor biosynthesis; NAD(+) biosynthesis; deamido-NAD(+) from nicotinate D-ribonucleotide: step 1/1. Functionally, catalyzes the reversible adenylation of nicotinate mononucleotide (NaMN) to nicotinic acid adenine dinucleotide (NaAD). This is Probable nicotinate-nucleotide adenylyltransferase from Endomicrobium trichonymphae.